A 259-amino-acid chain; its full sequence is Dickkopf-related protein 2 (259 aa).

A signal peptide spans 1–33; that stretch reads MAALMRSKDSSCCLLLLAAVLMVESSQIGSSRA. A glycan (N-linked (GlcNAc...) asparagine) is linked at asparagine 52. The DKK-type Cys-1 stretch occupies residues 78 to 127; the sequence is CSSDKECEVGRYCHSPHQGSSACMVCRRKKKRCHRDGMCCPSTRCNNGIC. Disulfide bonds link cysteine 183-cysteine 195, cysteine 189-cysteine 204, cysteine 194-cysteine 231, cysteine 214-cysteine 239, and cysteine 233-cysteine 256. Positions 183–256 are DKK-type Cys-2; it reads CLRSSDCIEG…YSSKARLHVC (74 aa).

Belongs to the dickkopf family. Interacts with LRP5 and LRP6. May be proteolytically processed by a furin-like protease. Expressed in heart, brain, skeletal muscle and lung.

Its subcellular location is the secreted. Its function is as follows. Antagonizes canonical Wnt signaling by inhibiting LRP5/6 interaction with Wnt and by forming a ternary complex with the transmembrane protein KREMEN that promotes internalization of LRP5/6. DKKs play an important role in vertebrate development, where they locally inhibit Wnt regulated processes such as antero-posterior axial patterning, limb development, somitogenesis and eye formation. In the adult, Dkks are implicated in bone formation and bone disease, cancer and Alzheimer disease. The polypeptide is Dickkopf-related protein 2 (DKK2) (Homo sapiens (Human)).